The chain runs to 142 residues: Dromaiocalcin-2 (142 aa).

Disulfide bonds link cysteine 6-cysteine 17, cysteine 34-cysteine 138, and cysteine 113-cysteine 130. Residues 13–139 (FDGRCYGFFP…CSDRKPFICA (127 aa)) enclose the C-type lectin domain. Phosphoserine occurs at positions 62 and 68.

Post-translationally, a minor form with some unmodified Ser-68 and partial phosphorylation of Ser-66 may also occur.

It is found in the secreted. The protein resides in the extracellular space. The protein localises to the extracellular matrix. This Dromaius novaehollandiae (Emu) protein is Dromaiocalcin-2.